The primary structure comprises 163 residues: Nucleotide-binding protein LBJ_2391 (163 aa).

Belongs to the YajQ family.

Nucleotide-binding protein. The polypeptide is Nucleotide-binding protein LBJ_2391 (Leptospira borgpetersenii serovar Hardjo-bovis (strain JB197)).